The chain runs to 72 residues: Translation initiation factor IF-1 (72 aa).

The 72-residue stretch at 1-72 (MAKDDVIEVE…TRGRITYRYK (72 aa)) folds into the S1-like domain. Y60 is subject to Phosphotyrosine.

The protein belongs to the IF-1 family. Component of the 30S ribosomal translation pre-initiation complex which assembles on the 30S ribosome in the order IF-2 and IF-3, IF-1 and N-formylmethionyl-tRNA(fMet); mRNA recruitment can occur at any time during PIC assembly.

It localises to the cytoplasm. In terms of biological role, one of the essential components for the initiation of protein synthesis. Stabilizes the binding of IF-2 and IF-3 on the 30S subunit to which N-formylmethionyl-tRNA(fMet) subsequently binds. Helps modulate mRNA selection, yielding the 30S pre-initiation complex (PIC). Upon addition of the 50S ribosomal subunit IF-1, IF-2 and IF-3 are released leaving the mature 70S translation initiation complex. This chain is Translation initiation factor IF-1, found in Geobacillus kaustophilus (strain HTA426).